The following is a 249-amino-acid chain: Phosphoribosylaminoimidazole-succinocarboxamide synthase (249 aa).

Belongs to the SAICAR synthetase family.

It carries out the reaction 5-amino-1-(5-phospho-D-ribosyl)imidazole-4-carboxylate + L-aspartate + ATP = (2S)-2-[5-amino-1-(5-phospho-beta-D-ribosyl)imidazole-4-carboxamido]succinate + ADP + phosphate + 2 H(+). It participates in purine metabolism; IMP biosynthesis via de novo pathway; 5-amino-1-(5-phospho-D-ribosyl)imidazole-4-carboxamide from 5-amino-1-(5-phospho-D-ribosyl)imidazole-4-carboxylate: step 1/2. The polypeptide is Phosphoribosylaminoimidazole-succinocarboxamide synthase (Roseiflexus castenholzii (strain DSM 13941 / HLO8)).